We begin with the raw amino-acid sequence, 117 residues long: Holo-[acyl-carrier-protein] synthase (117 aa).

The Mg(2+) site is built by Asp6 and Glu55.

It belongs to the P-Pant transferase superfamily. AcpS family. The cofactor is Mg(2+).

The protein resides in the cytoplasm. The catalysed reaction is apo-[ACP] + CoA = holo-[ACP] + adenosine 3',5'-bisphosphate + H(+). Functionally, transfers the 4'-phosphopantetheine moiety from coenzyme A to a Ser of acyl-carrier-protein. The polypeptide is Holo-[acyl-carrier-protein] synthase (Chlorobaculum parvum (strain DSM 263 / NCIMB 8327) (Chlorobium vibrioforme subsp. thiosulfatophilum)).